The following is a 41-amino-acid chain: Large ribosomal subunit protein bL36 (41 aa).

This sequence belongs to the bacterial ribosomal protein bL36 family.

This is Large ribosomal subunit protein bL36 from Bartonella bacilliformis (strain ATCC 35685 / KC583 / Herrer 020/F12,63).